Reading from the N-terminus, the 128-residue chain is DNA-directed RNA polymerase subunit omega (128 aa).

The tract at residues 87 to 106 is disordered; the sequence is ARSSQAAPKSAPGQEIGKSF.

The protein belongs to the RNA polymerase subunit omega family. The RNAP catalytic core consists of 2 alpha, 1 beta, 1 beta' and 1 omega subunit. When a sigma factor is associated with the core the holoenzyme is formed, which can initiate transcription.

It carries out the reaction RNA(n) + a ribonucleoside 5'-triphosphate = RNA(n+1) + diphosphate. Promotes RNA polymerase assembly. Latches the N- and C-terminal regions of the beta' subunit thereby facilitating its interaction with the beta and alpha subunits. In Anaplasma marginale (strain St. Maries), this protein is DNA-directed RNA polymerase subunit omega.